Here is a 327-residue protein sequence, read N- to C-terminus: Regulatory protein MsrR (327 aa).

Positions 1-18 (MDKETNDNEYRRQSEHRT) are enriched in basic and acidic residues. Residues 1-24 (MDKETNDNEYRRQSEHRTSAPKRK) are disordered. Topologically, residues 1–31 (MDKETNDNEYRRQSEHRTSAPKRKKKKKIRK) are cytoplasmic. A helical; Signal-anchor for type II membrane protein membrane pass occupies residues 32–52 (LPIILLIVVILLIALVVYIVH). Over 53-327 (SYNSGVEYAK…QAIKDFLDED (275 aa)) the chain is Extracellular.

The protein belongs to the LytR/CpsA/Psr (LCP) family.

The protein localises to the cell membrane. In terms of biological role, involved in SarA attenuation. Affects resistance to oxacillin and teicoplanin, as well as the synthesis of virulence factors. In Staphylococcus aureus (strain Mu50 / ATCC 700699), this protein is Regulatory protein MsrR (msrR).